The primary structure comprises 318 residues: NADH-ubiquinone oxidoreductase chain 1 (318 aa).

A run of 8 helical transmembrane segments spans residues 2–22 (FMIN…FLTL), 70–90 (MFII…SPLP), 100–120 (LGVL…LWSG), 136–156 (VAQT…VLLM), 172–192 (LWLL…TLAE), 222–242 (LFFL…AILF), 253–273 (ELYT…FLWI), and 294–314 (LPLT…TASI).

It belongs to the complex I subunit 1 family. In terms of assembly, core subunit of respiratory chain NADH dehydrogenase (Complex I) which is composed of 45 different subunits.

It is found in the mitochondrion inner membrane. The enzyme catalyses a ubiquinone + NADH + 5 H(+)(in) = a ubiquinol + NAD(+) + 4 H(+)(out). Core subunit of the mitochondrial membrane respiratory chain NADH dehydrogenase (Complex I) which catalyzes electron transfer from NADH through the respiratory chain, using ubiquinone as an electron acceptor. Essential for the catalytic activity and assembly of complex I. The polypeptide is NADH-ubiquinone oxidoreductase chain 1 (MT-ND1) (Balaenoptera physalus (Fin whale)).